Reading from the N-terminus, the 271-residue chain is Aquaporin-11 (271 aa).

Over 1–14 (MSPLLGLRSELQDT) the chain is Cytoplasmic. The helical transmembrane segment at 15–35 (CTSLGLMLSVVLLMGLARVVA) threads the bilayer. At 36–41 (RQQLHR) the chain is on the lumenal side. Residues 42–62 (PVAHAFVLEFLATFQLCCCTH) traverse the membrane as a helical segment. Residues 63 to 74 (ELQLLSEQHPAH) are Cytoplasmic-facing. The helical transmembrane segment at 75 to 95 (PTWTLTLVYFFSLVHGLTLVG) threads the bilayer. The Lumenal portion of the chain corresponds to 96-163 (TSSNPCGVMM…ACKNPIRVDL (68 aa)). Positions 99 to 101 (NPC) match the NPC motif. The helical transmembrane segment at 164 to 184 (LKAVITEAVCSFLFHSALLHF) threads the bilayer. Residues 185-194 (QEVRTKLRIH) are Cytoplasmic-facing. The helical transmembrane segment at 195–215 (LLAALITFLVYAGGSLTGAVF) threads the bilayer. An NPA motif is present at residues 216-218 (NPA). Residues 216–234 (NPALALSLHFMCFDEAFPQ) lie on the Lumenal side of the membrane. The chain crosses the membrane as a helical span at residues 235–255 (FFIVYWLAPSLGILLMILMFS). The Cytoplasmic portion of the chain corresponds to 256-271 (FFLPWLHNNHTINKKE).

Belongs to the MIP/aquaporin (TC 1.A.8) family. AQP11/AQP12 subfamily. Homodimer; disulfide-linked. Homotetramer. Can also form homomultimer. Not glycosylated. In terms of tissue distribution, detected in the sperm head and tail (at protein level). Expressed in subcutaneous adipocytes. Expressed in testis, kidney and ejaculated spermatozoa.

The protein localises to the endoplasmic reticulum membrane. Its subcellular location is the cytoplasmic vesicle membrane. The protein resides in the cell membrane. It catalyses the reaction H2O(in) = H2O(out). The enzyme catalyses glycerol(in) = glycerol(out). It carries out the reaction H2O2(out) = H2O2(in). Functionally, channel protein that facilitates the transport of water, glycerol and hydrogen peroxide across membrane of cell or organelles guaranteeing intracellular homeostasis in several organes like liver, kidney and brain. In situation of stress, participates in endoplasmic reticulum (ER) homeostasis by regulating redox homeostasis through the transport of hydrogen peroxide across the endoplasmic reticulum membrane thereby regulating the oxidative stress through the NADPH oxidase 2 pathway. Plays a role by maintaining an environment suitable for translation or protein foldings in the ER lumen namely by participating in the PKD1 glycosylation processing resulting in regulation of PKD1 membrane trafficking thereby preventing the accumulation of unfolding protein in ER. Plays a role in the proximal tubule function by regulating its endosomal acidification. May play a role in postnatal kidney development. The chain is Aquaporin-11 from Homo sapiens (Human).